The primary structure comprises 353 residues: uncharacterized protein (353 aa).

Disordered regions lie at residues 1–24 (MSTS…QQSQ), 245–280 (NKSS…EKVP), and 305–353 (AAGK…DLNN). A compositionally biased stretch (low complexity) spans 9 to 24 (NKKNNTKQQKYQQQSQ). Residues 254–280 (KSGDKSTVKSTDKQVEKKVEESSEKVP) are compositionally biased toward basic and acidic residues. Residues 321–332 (VTTSTSESTVEV) show a composition bias toward low complexity. Residues 342–353 (EPDEEVFEDLNN) show a composition bias toward acidic residues.

This is an uncharacterized protein from Acanthamoeba polyphaga mimivirus (APMV).